Here is a 392-residue protein sequence, read N- to C-terminus: Retrovirus-related Pol polyprotein from type-1 retrotransposable element R1 4 (392 aa).

In terms of domain architecture, Reverse transcriptase spans 1–230 (PFADDLAVLV…GGVVIRRRPE (230 aa)). The tract at residues 231–392 (GLKENYNRVL…DEGLSSESEE (162 aa)) is nucleic acid-binding endonuclease.

The enzyme catalyses DNA(n) + a 2'-deoxyribonucleoside 5'-triphosphate = DNA(n+1) + diphosphate. This Nasonia vitripennis (Parasitic wasp) protein is Retrovirus-related Pol polyprotein from type-1 retrotransposable element R1 4.